The primary structure comprises 525 residues: NAD(P)H-quinone oxidoreductase subunit 2 (525 aa).

The next 14 helical transmembrane spans lie at 14 to 34 (AIWPEVVVTLTLLIVLVVDLV), 42 to 62 (SLPALSLFGLLGALVTLVLQW), 78 to 98 (PVSILFRGLVVATAALTVMMA), 117 to 137 (LTATLGGMFLAGATDLIMVFV), 167 to 187 (LLTGASSTAIFLYGMSLLYGL), 201 to 221 (LANAGLVGILALVFCLGGIGF), 240 to 260 (PTPVVAFLSVGSKAAGFALAI), 276 to 296 (AVLSVLAILTMVLGNVVAIAQ), 302 to 322 (LLAYSSIGQAGFVLIGLVAGT), 330 to 350 (IFYLMVYLAMNLGAFLCVTLF), 374 to 394 (LCLSICLLSLGGLPPLAGFFG), 396 to 416 (LYLFWAGWQAGEYTLVLVGLV), 462 to 482 (VGMVVTLVATIFAGILSNPLF), and 494 to 514 (FLGFPTAQAFAPGSASPSLAV).

This sequence belongs to the complex I subunit 2 family. As to quaternary structure, NDH-1 can be composed of about 15 different subunits; different subcomplexes with different compositions have been identified which probably have different functions.

The protein resides in the cellular thylakoid membrane. It carries out the reaction a plastoquinone + NADH + (n+1) H(+)(in) = a plastoquinol + NAD(+) + n H(+)(out). It catalyses the reaction a plastoquinone + NADPH + (n+1) H(+)(in) = a plastoquinol + NADP(+) + n H(+)(out). NDH-1 shuttles electrons from an unknown electron donor, via FMN and iron-sulfur (Fe-S) centers, to quinones in the respiratory and/or the photosynthetic chain. The immediate electron acceptor for the enzyme in this species is believed to be plastoquinone. Couples the redox reaction to proton translocation, and thus conserves the redox energy in a proton gradient. Cyanobacterial NDH-1 also plays a role in inorganic carbon-concentration. The sequence is that of NAD(P)H-quinone oxidoreductase subunit 2 from Synechococcus sp. (strain JA-3-3Ab) (Cyanobacteria bacterium Yellowstone A-Prime).